The following is an 85-amino-acid chain: MTLTMSTVVFFSLILLTLGLQPKDKDEGVMGRSRLGKRGLLMRSLDEELKSNDCPEYCPHGNECCEHHECRYDPWSRELKCLDSR.

The signal sequence occupies residues 1-20 (MTLTMSTVVFFSLILLTLGL). The propeptide occupies 21–43 (QPKDKDEGVMGRSRLGKRGLLMR). Intrachain disulfides connect cysteine 54–cysteine 65, cysteine 58–cysteine 70, and cysteine 64–cysteine 81.

In terms of tissue distribution, expressed by the venom duct.

Its subcellular location is the secreted. This is Augerpeptide-s6a from Terebra subulata (Chocolate spotted auger).